A 504-amino-acid chain; its full sequence is Maturase K (504 aa).

Belongs to the intron maturase 2 family. MatK subfamily.

The protein resides in the plastid. The protein localises to the chloroplast. Functionally, usually encoded in the trnK tRNA gene intron. Probably assists in splicing its own and other chloroplast group II introns. The protein is Maturase K of Chimaphila umbellata (Pipsissewa).